Reading from the N-terminus, the 254-residue chain is 4-hydroxy-tetrahydrodipicolinate reductase (254 aa).

7-12 contacts NAD(+); that stretch reads GASGRI. Arg-35 contributes to the NADP(+) binding site. NAD(+) contacts are provided by residues 91–93 and 115–118; these read GTT and AHNM. The active-site Proton donor/acceptor is the His-147. (S)-2,3,4,5-tetrahydrodipicolinate is bound at residue His-148. Lys-151 (proton donor) is an active-site residue. 157–158 serves as a coordination point for (S)-2,3,4,5-tetrahydrodipicolinate; that stretch reads GT.

The protein belongs to the DapB family.

It is found in the cytoplasm. It catalyses the reaction (S)-2,3,4,5-tetrahydrodipicolinate + NAD(+) + H2O = (2S,4S)-4-hydroxy-2,3,4,5-tetrahydrodipicolinate + NADH + H(+). The enzyme catalyses (S)-2,3,4,5-tetrahydrodipicolinate + NADP(+) + H2O = (2S,4S)-4-hydroxy-2,3,4,5-tetrahydrodipicolinate + NADPH + H(+). It participates in amino-acid biosynthesis; L-lysine biosynthesis via DAP pathway; (S)-tetrahydrodipicolinate from L-aspartate: step 4/4. In terms of biological role, catalyzes the conversion of 4-hydroxy-tetrahydrodipicolinate (HTPA) to tetrahydrodipicolinate. This is 4-hydroxy-tetrahydrodipicolinate reductase from Helicobacter pylori (strain P12).